Consider the following 377-residue polypeptide: Actin-related protein T2 (377 aa).

The protein belongs to the actin family.

It localises to the cytoplasm. The protein localises to the cytoskeleton. The polypeptide is Actin-related protein T2 (ACTRT2) (Macaca fascicularis (Crab-eating macaque)).